The sequence spans 378 residues: Protein RecA (378 aa).

G79–T86 lines the ATP pocket.

This sequence belongs to the RecA family.

It is found in the cytoplasm. In terms of biological role, can catalyze the hydrolysis of ATP in the presence of single-stranded DNA, the ATP-dependent uptake of single-stranded DNA by duplex DNA, and the ATP-dependent hybridization of homologous single-stranded DNAs. It interacts with LexA causing its activation and leading to its autocatalytic cleavage. The chain is Protein RecA from Streptococcus pyogenes serotype M49 (strain NZ131).